Here is a 79-residue protein sequence, read N- to C-terminus: Raniseptin-9 (79 aa).

Residues 1 to 22 (MAFLKKSLFLVLFLGIVSLSIC) form the signal peptide. The propeptide occupies 23–49 (EEEKREGEEEEKQEEENEELSEEELRE). Positions 27 to 46 (REGEEEEKQEEENEELSEEE) are disordered. Over residues 30–44 (EEEEKQEEENEELSE) the composition is skewed to acidic residues.

The protein belongs to the frog skin active peptide (FSAP) family. Dermaseptin subfamily. Expressed by the skin glands.

It localises to the secreted. In terms of biological role, has antibacterial activity. The sequence is that of Raniseptin-9 from Boana raniceps (Chaco tree frog).